A 221-amino-acid polypeptide reads, in one-letter code: Glutathione S-transferase alpha-3 (221 aa).

A GST N-terminal domain is found at 3–83 (GKPVLHYFDG…YIATKYNLYG (81 aa)). Residue K4 is modified to N6-succinyllysine. Glutathione is bound by residues Y9, R45, 54 to 55 (QV), and 67 to 68 (QT). A GST C-terminal domain is found at 85-207 (DMKERALIDM…LQPGSQRKPL (123 aa)).

Belongs to the GST superfamily. Alpha family. As to quaternary structure, heterodimer of YC1 and YC2.

It is found in the cytoplasm. The enzyme catalyses RX + glutathione = an S-substituted glutathione + a halide anion + H(+). It catalyses the reaction androst-5-ene-3,17-dione = androst-4-ene-3,17-dione. The catalysed reaction is pregn-5-ene-3,20-dione = progesterone. Conjugation of reduced glutathione to a wide number of exogenous and endogenous hydrophobic electrophiles. Catalyzes isomerization reactions that contribute to the biosynthesis of steroid hormones. Efficiently catalyze obligatory double-bond isomerizations of delta(5)-androstene-3,17-dione and delta(5)-pregnene-3,20-dione, precursors to testosterone and progesterone, respectively. Has substantial activity toward aflatoxin B1-8,9-epoxide. The protein is Glutathione S-transferase alpha-3 of Rattus norvegicus (Rat).